The following is a 508-amino-acid chain: TATA box-binding protein-like 1 (508 aa).

Disordered regions lie at residues 145–190, 236–262, and 456–479; these read QISY…QMHH, EPIP…PMPD, and QKKR…FDDS.

The protein belongs to the TBP family.

The protein localises to the nucleus. Functionally, may be a general transcription factor. Plays an essential role for RNA polymerase II/ama-1 transcription in early embryos whereby it activates a subset of RNA polymerase II promoters and facilitates the reestablishment of transcription after mitosis. This Caenorhabditis elegans protein is TATA box-binding protein-like 1.